The following is a 301-amino-acid chain: Probable alpha-L-glutamate ligase 1 (301 aa).

Residues 104–287 (LQLLSRKGIG…VTEPIVEYIE (184 aa)) enclose the ATP-grasp domain. ATP contacts are provided by residues K141, 178–179 (EY), D187, and 211–213 (RSN). 3 residues coordinate Mg(2+): D248, E260, and N262. Mn(2+) is bound by residues D248, E260, and N262.

It belongs to the RimK family. Mg(2+) serves as cofactor. The cofactor is Mn(2+).

This Shewanella baltica (strain OS155 / ATCC BAA-1091) protein is Probable alpha-L-glutamate ligase 1.